Reading from the N-terminus, the 260-residue chain is Proteasome subunit alpha 1 (260 aa).

The disordered stretch occupies residues 237-260; it reads AEADLLDTGEDADDEAEDEDATEE. A compositionally biased stretch (acidic residues) spans 240–260; that stretch reads DLLDTGEDADDEAEDEDATEE.

This sequence belongs to the peptidase T1A family. The 20S proteasome core is composed of 14 alpha and 14 beta subunits that assemble into four stacked heptameric rings, resulting in a barrel-shaped structure. The two inner rings, each composed of seven catalytic beta subunits, are sandwiched by two outer rings, each composed of seven alpha subunits. The catalytic chamber with the active sites is on the inside of the barrel. Has a gated structure, the ends of the cylinder being occluded by the N-termini of the alpha-subunits. Is capped at one or both ends by the proteasome regulatory ATPase, PAN.

The protein resides in the cytoplasm. Its activity is regulated as follows. The formation of the proteasomal ATPase PAN-20S proteasome complex, via the docking of the C-termini of PAN into the intersubunit pockets in the alpha-rings, triggers opening of the gate for substrate entry. Interconversion between the open-gate and close-gate conformations leads to a dynamic regulation of the 20S proteasome proteolysis activity. Functionally, component of the proteasome core, a large protease complex with broad specificity involved in protein degradation. In Haloarcula marismortui (strain ATCC 43049 / DSM 3752 / JCM 8966 / VKM B-1809) (Halobacterium marismortui), this protein is Proteasome subunit alpha 1.